The following is a 515-amino-acid chain: MLVDTGLGLISELQAKLGWAVLLQIVPITIVAYNLLWFIYASFFSSLRKIPGPFLARISRVWEMKKTATGNIHEIMMDLHRRHGAIVRIGPRRYDFDTMEALKIIYRIGNALPKADYYKPFGLPSFPNLFDEQNPARHSAIKKQVASLYTMTALLSYEEGVDGQTAILKEQLQRFCDQKQVIDLPRFLQYYAFDVIGVITVGKSMGMMESNSDTNGACSALDGMWHYASMMAYIPNMHAWWLRLSSLLPIEVPIKGLTEYVERRIIQYRLKAAEFGDDAALKGENNFLAKLLLMEKKGTVTPVETQQAVGLNIGAGSDTTANALSTILYYLYTNPRTLHTLREELERYVKDGPISFQQSQSMPYLQAVIKEALRLHPGVGTQLTRVVPKGGLVIEGQFFPEGTEVGVNGWALYHNKAIFGNDASIFRPERWLEANENINIGGSFAFGAGSRSCIGKNISILEMSKAIPQIVRNFDIEINHGDMTWKNECWWFVKPEYKAMIKPRRCCLSRDESLV.

Heme is bound at residue cysteine 453.

The protein belongs to the cytochrome P450 family. Heme is required as a cofactor.

Can detoxify the phytoalexin pisatin from garden pea. Pisatin is an antimicrobial compound produced by pea in response to infection by plant pathogens. The protein is Pisatin demethylase (PDAT9) of Fusarium vanettenii (Neocosmospora pisi).